The sequence spans 511 residues: ATP synthase subunit alpha, mitochondrial (511 aa).

171–178 (GDRQTGKT) lines the ATP pocket.

It belongs to the ATPase alpha/beta chains family. In terms of assembly, F-type ATPases have 2 components, CF(1) - the catalytic core - and CF(0) - the membrane proton channel. CF(1) has five subunits: alpha(3), beta(3), gamma(1), delta(1), epsilon(1). CF(0) has three main subunits: a, b and c.

Its subcellular location is the mitochondrion. It localises to the mitochondrion inner membrane. Functionally, mitochondrial membrane ATP synthase (F(1)F(0) ATP synthase or Complex V) produces ATP from ADP in the presence of a proton gradient across the membrane which is generated by electron transport complexes of the respiratory chain. F-type ATPases consist of two structural domains, F(1) - containing the extramembraneous catalytic core, and F(0) - containing the membrane proton channel, linked together by a central stalk and a peripheral stalk. During catalysis, ATP synthesis in the catalytic domain of F(1) is coupled via a rotary mechanism of the central stalk subunits to proton translocation. Subunits alpha and beta form the catalytic core in F(1). Rotation of the central stalk against the surrounding alpha(3)beta(3) subunits leads to hydrolysis of ATP in three separate catalytic sites on the beta subunits. Subunit alpha does not bear the catalytic high-affinity ATP-binding sites. This chain is ATP synthase subunit alpha, mitochondrial (ATPA), found in Oenothera biennis (German evening primrose).